The sequence spans 226 residues: 2-dehydro-3-deoxy-phosphogluconate aldolase (226 aa).

The active-site Proton acceptor is Glu-57. Residues Arg-61, Thr-85, and Lys-145 each coordinate pyruvate. Lys-145 acts as the Schiff-base intermediate with substrate in catalysis.

The protein belongs to the KHG/KDPG aldolase family. As to quaternary structure, homotrimer.

It catalyses the reaction 2-dehydro-3-deoxy-6-phospho-D-gluconate = D-glyceraldehyde 3-phosphate + pyruvate. It participates in carbohydrate acid metabolism; 2-dehydro-3-deoxy-D-gluconate degradation; D-glyceraldehyde 3-phosphate and pyruvate from 2-dehydro-3-deoxy-D-gluconate: step 2/2. Involved in the degradation of glucose via the Entner-Doudoroff pathway. Catalyzes the reversible, stereospecific retro-aldol cleavage of 2-keto-3-deoxy-6-phosphogluconate (KDPG) to pyruvate and D-glyceraldehyde-3-phosphate. The polypeptide is 2-dehydro-3-deoxy-phosphogluconate aldolase (Pseudomonas putida (Arthrobacter siderocapsulatus)).